Reading from the N-terminus, the 351-residue chain is Ribosomal RNA large subunit methyltransferase M (351 aa).

S-adenosyl-L-methionine is bound by residues Ser186, 219–222, Asp238, Asp258, and Asp274; that span reads APGG. The Proton acceptor role is filled by Lys303.

This sequence belongs to the class I-like SAM-binding methyltransferase superfamily. RNA methyltransferase RlmE family. RlmM subfamily. Monomer.

The protein resides in the cytoplasm. It carries out the reaction cytidine(2498) in 23S rRNA + S-adenosyl-L-methionine = 2'-O-methylcytidine(2498) in 23S rRNA + S-adenosyl-L-homocysteine + H(+). Its function is as follows. Catalyzes the 2'-O-methylation at nucleotide C2498 in 23S rRNA. The polypeptide is Ribosomal RNA large subunit methyltransferase M (Xylella fastidiosa (strain M12)).